Here is a 423-residue protein sequence, read N- to C-terminus: LysM domain-containing GPI-anchored protein 3 (423 aa).

The N-terminal stretch at 1-24 is a signal peptide; sequence MKNPEKPLLLFLILASSLASMATA. Disulfide bonds link Cys31–Cys97, Cys37–Cys160, Cys95–Cys158, and Cys97–Cys160. The LysM 1 domain maps to 107–154; the sequence is THYKTRTSDTLGSIADSVYGGLVSPEQIQVANSETDLSVLDVGTKLVI. An N-linked (GlcNAc...) asparagine glycan is attached at Asn162. The LysM 2 domain occupies 173–216; it reads LSYVVRGIDTMAGIAKRFSTSVTDLTNVNAMGAPDINPGDILAV. Cystine bridges form between Cys221–Cys253 and Cys248–Cys276. N-linked (GlcNAc...) asparagine glycosylation occurs at Asn238. The N-linked (GlcNAc...) asparagine glycan is linked to Asn285. Gly394 carries the GPI-anchor amidated glycine lipid modification. A propeptide spans 395–423 (removed in mature form); the sequence is GSISIASCPLSYYSFIALLIPIGSCFFVF.

Interacts with peptidoglycans.

It is found in the cell membrane. Functionally, required as a cell surface receptor for peptidoglycan (PGN) elicitor signaling leading to innate immunity. Plays an essential role in detecting PGNs and restricting bacterial growth (of Pseudomonas syringae pv. tomato DC3000 for example). This chain is LysM domain-containing GPI-anchored protein 3 (LYM3), found in Arabidopsis thaliana (Mouse-ear cress).